The following is a 71-amino-acid chain: NAD(P)H-quinone oxidoreductase subunit O (71 aa).

Belongs to the complex I NdhO subunit family. As to quaternary structure, NDH-1 can be composed of about 15 different subunits; different subcomplexes with different compositions have been identified which probably have different functions.

The protein resides in the cellular thylakoid membrane. The catalysed reaction is a plastoquinone + NADH + (n+1) H(+)(in) = a plastoquinol + NAD(+) + n H(+)(out). The enzyme catalyses a plastoquinone + NADPH + (n+1) H(+)(in) = a plastoquinol + NADP(+) + n H(+)(out). In terms of biological role, NDH-1 shuttles electrons from an unknown electron donor, via FMN and iron-sulfur (Fe-S) centers, to quinones in the respiratory and/or the photosynthetic chain. The immediate electron acceptor for the enzyme in this species is believed to be plastoquinone. Couples the redox reaction to proton translocation, and thus conserves the redox energy in a proton gradient. Cyanobacterial NDH-1 also plays a role in inorganic carbon-concentration. The protein is NAD(P)H-quinone oxidoreductase subunit O of Nostoc punctiforme (strain ATCC 29133 / PCC 73102).